Reading from the N-terminus, the 276-residue chain is Transmembrane protein 81 (276 aa).

Positions 1–24 (MKTSATSFIPGSLVLAFCLPVVAT) are cleaved as a signal peptide. Residues 25-225 (SPKTLAIPEK…QHPPWKKKVA (201 aa)) are Extracellular-facing. The N-linked (GlcNAc...) asparagine glycan is linked to Asn45. In terms of domain architecture, Ig-like spans 83-176 (TNWLCGMLHF…NLRLVKRLYF (94 aa)). Cysteines 104 and 160 form a disulfide. Residue Asn211 is glycosylated (N-linked (GlcNAc...) asparagine). Residues 226-246 (IAVGIGVAGGVTGGVLVSIVL) form a helical membrane-spanning segment. The Cytoplasmic segment spans residues 247–276 (CGRLSVIHSSASLETLQALLPKGGMLRKPD).

Forms a complex with IZUMO1 and SPACA6 on spermatocyte cell membrane required for fertilization.

The protein localises to the cell membrane. Essential fertilization factor required for male fertility. Part of a conserved trimeric sperm complex with the essential fertilization factors IZUMO1 and SPACA6 which bridges sperm and oocyte membranes during fertilization by binding to IZUMO1R/JUNO on the oocyte. The protein is Transmembrane protein 81 (TMEM81) of Bos taurus (Bovine).